A 98-amino-acid polypeptide reads, in one-letter code: Protein FAM24A (98 aa).

Positions 1-29 (MFDLRTKVMIGIASTLLIAAIVLITVVFC) are cleaved as a signal peptide.

It belongs to the FAM24 family.

It localises to the secreted. This Rattus norvegicus (Rat) protein is Protein FAM24A (Fam24a).